The primary structure comprises 370 residues: Putative glutamate--cysteine ligase 2 (370 aa).

It belongs to the glutamate--cysteine ligase type 2 family. YbdK subfamily.

It carries out the reaction L-cysteine + L-glutamate + ATP = gamma-L-glutamyl-L-cysteine + ADP + phosphate + H(+). Its function is as follows. ATP-dependent carboxylate-amine ligase which exhibits weak glutamate--cysteine ligase activity. The sequence is that of Putative glutamate--cysteine ligase 2 from Methylibium petroleiphilum (strain ATCC BAA-1232 / LMG 22953 / PM1).